The primary structure comprises 617 residues: Putative type VI secretion system protein VgrGA (617 aa).

2 disordered regions span residues Gly-325–Asn-344 and Arg-449–Ser-469.

The protein belongs to the VgrG protein family.

Its function is as follows. A Vgr protein that is probably part of a type VI secretion system (T6SS). May be required for export of proteins involved in Rhs-mediated cellular contact-dependent growth inhibition (CDI). In Dickeya dadantii (strain 3937) (Erwinia chrysanthemi (strain 3937)), this protein is Putative type VI secretion system protein VgrGA (vgrGA).